The primary structure comprises 119 residues: Fluoride-specific ion channel FluC (119 aa).

Transmembrane regions (helical) follow at residues isoleucine 5–alanine 25, leucine 30–phenylalanine 50, tryptophan 59–leucine 79, and serine 92–leucine 112. Glycine 69 and threonine 72 together coordinate Na(+).

The protein belongs to the fluoride channel Fluc/FEX (TC 1.A.43) family.

The protein resides in the cell inner membrane. It carries out the reaction fluoride(in) = fluoride(out). Its activity is regulated as follows. Na(+) is not transported, but it plays an essential structural role and its presence is essential for fluoride channel function. Fluoride-specific ion channel. Important for reducing fluoride concentration in the cell, thus reducing its toxicity. This is Fluoride-specific ion channel FluC from Neisseria gonorrhoeae (strain NCCP11945).